The chain runs to 484 residues: Sodium-dependent glucose transporter 1 (484 aa).

Ser-6 is subject to Phosphoserine. 12 helical membrane-spanning segments follow: residues 40 to 60 (WFTTVVLNAAFLGMGVSAAVL), 80 to 100 (EIFVGRALGYLGGSVVGGVLF), 106 to 126 (FLLLGLSHLLTAAGLYLTPFC), 135 to 155 (MMSITGVSFGVLDTGGNVLIL), 168 to 188 (ALHFSFALGAFLAPLLAKLAW), 227 to 247 (LLWAYASIGTYVLVLSVFLFA), 274 to 294 (ALLCLLFLFFFFYVGAEVTYG), 317 to 337 (SIFWGTFAACRGLAIFFATLL), 340 to 360 (GTMMVLCNIGSLASSFFLVLF), 366 to 386 (CLWIASSVYGASMAATFPSGI), 401 to 421 (AFILVGAALGLMATPALSGIL), and 428 to 448 (LPVILYMCLGSAVLTTVLFPV).

Belongs to the major facilitator superfamily. Expressed in brain, liver, lung, and kidney. In kidney expressed in cortex and inner medulla, in ascending thin limbs (ATLs) and lower descending thin limbs (DTLs). Primarily expressed in the proximal tubules of the kidney.

Its subcellular location is the apical cell membrane. In terms of biological role, may function as a sodium-dependent glucose transporter. Potential channels for urea in the inner medulla of kidney. This Rattus norvegicus (Rat) protein is Sodium-dependent glucose transporter 1.